Reading from the N-terminus, the 882-residue chain is Homeobox-leucine zipper protein ROC3 (882 aa).

Residues 104–144 (DVDDDHKPQHSGHDQPPDAAQPSGAAGGNAKKKRYHRHTAH) form a disordered region. The segment covering 107–119 (DDHKPQHSGHDQP) has biased composition (basic and acidic residues). The segment covering 133-143 (AKKKRYHRHTA) has biased composition (basic residues). Positions 134–193 (KKKRYHRHTAHQIQQMEALFKECPHPDDKQRLKLSQELGLKPRQVKFWFQNRRTQMKAQQ) form a DNA-binding region, homeobox. The stretch at 200 to 263 (ILRAENENLK…LDRLACIATR (64 aa)) forms a coiled coil. An START domain is found at 340 to 584 (QEQDKQLVVD…LQRQCERLAS (245 aa)). Positions 782–816 (AAAPTISSSTTTTTGNGNGETSSTPPRNSSSNNNN) are enriched in low complexity. Residues 782 to 820 (AAAPTISSSTTTTTGNGNGETSSTPPRNSSSNNNNADEL) form a disordered region.

This sequence belongs to the HD-ZIP homeobox family. Class IV subfamily.

The protein localises to the nucleus. Probable transcription factor. This is Homeobox-leucine zipper protein ROC3 (ROC3) from Oryza sativa subsp. indica (Rice).